The following is a 213-amino-acid chain: tRNA (guanine-N(7)-)-methyltransferase (213 aa).

Residues E44, E69, D96, and D118 each contribute to the S-adenosyl-L-methionine site. D118 is an active-site residue. Substrate is bound by residues K122, D154, and 192–195; that span reads TEYE.

It belongs to the class I-like SAM-binding methyltransferase superfamily. TrmB family.

It carries out the reaction guanosine(46) in tRNA + S-adenosyl-L-methionine = N(7)-methylguanosine(46) in tRNA + S-adenosyl-L-homocysteine. It participates in tRNA modification; N(7)-methylguanine-tRNA biosynthesis. Catalyzes the formation of N(7)-methylguanine at position 46 (m7G46) in tRNA. This is tRNA (guanine-N(7)-)-methyltransferase from Limosilactobacillus reuteri (strain DSM 20016) (Lactobacillus reuteri).